The primary structure comprises 118 residues: Small ribosomal subunit protein uS13 (118 aa).

A disordered region spans residues Gly-94–Lys-118.

This sequence belongs to the universal ribosomal protein uS13 family. As to quaternary structure, part of the 30S ribosomal subunit. Forms a loose heterodimer with protein S19. Forms two bridges to the 50S subunit in the 70S ribosome.

In terms of biological role, located at the top of the head of the 30S subunit, it contacts several helices of the 16S rRNA. In the 70S ribosome it contacts the 23S rRNA (bridge B1a) and protein L5 of the 50S subunit (bridge B1b), connecting the 2 subunits; these bridges are implicated in subunit movement. Contacts the tRNAs in the A and P-sites. This chain is Small ribosomal subunit protein uS13, found in Pseudomonas aeruginosa (strain LESB58).